Here is an 81-residue protein sequence, read N- to C-terminus: Photosystem I iron-sulfur center (81 aa).

2 4Fe-4S ferredoxin-type domains span residues 2-31 and 39-68; these read SHAV…MVPW and IASS…IRVY. [4Fe-4S] cluster contacts are provided by C11, C14, C17, C21, C48, C51, C54, and C58.

The cyanobacterial PSI reaction center is composed of one copy each of PsaA,B,C,D,E,F,I,J,K,L,M and X, and forms trimeric complexes. The cofactor is [4Fe-4S] cluster.

The protein resides in the cellular thylakoid membrane. It catalyses the reaction reduced [plastocyanin] + hnu + oxidized [2Fe-2S]-[ferredoxin] = oxidized [plastocyanin] + reduced [2Fe-2S]-[ferredoxin]. Apoprotein for the two 4Fe-4S centers FA and FB of photosystem I (PSI); essential for photochemical activity. FB is the terminal electron acceptor of PSI, donating electrons to ferredoxin. The C-terminus interacts with PsaA/B/D and helps assemble the protein into the PSI complex. Required for binding of PsaD and PsaE to PSI. PSI is a plastocyanin/cytochrome c6-ferredoxin oxidoreductase, converting photonic excitation into a charge separation, which transfers an electron from the donor P700 chlorophyll pair to the spectroscopically characterized acceptors A0, A1, FX, FA and FB in turn. The protein is Photosystem I iron-sulfur center of Prochlorococcus marinus (strain NATL2A).